The sequence spans 138 residues: MAALPDKEKLLRNFTRCANWEEKYLYIIELGQRLAELNPQDRNPQNTIHGCQSQVWIVMRRNANGIIELQGDSDAAIVKGLMAVVFILYHQMTAQDIVHFDVRPWFEKMALAQHLTPSRSQGLEAMIRAIRAKAATLS.

Cys-51 (cysteine persulfide intermediate) is an active-site residue.

It belongs to the SufE family. As to quaternary structure, homodimer. Interacts with SufS.

It is found in the cytoplasm. Its pathway is cofactor biosynthesis; iron-sulfur cluster biosynthesis. In terms of biological role, participates in cysteine desulfuration mediated by SufS. Cysteine desulfuration mobilizes sulfur from L-cysteine to yield L-alanine and constitutes an essential step in sulfur metabolism for biosynthesis of a variety of sulfur-containing biomolecules. Functions as a sulfur acceptor for SufS, by mediating the direct transfer of the sulfur atom from the S-sulfanylcysteine of SufS, an intermediate product of cysteine desulfuration process. The chain is Cysteine desulfuration protein SufE from Salmonella dublin (strain CT_02021853).